Reading from the N-terminus, the 170-residue chain is Adenine phosphoribosyltransferase (170 aa).

The protein belongs to the purine/pyrimidine phosphoribosyltransferase family. Homodimer.

The protein resides in the cytoplasm. The enzyme catalyses AMP + diphosphate = 5-phospho-alpha-D-ribose 1-diphosphate + adenine. The protein operates within purine metabolism; AMP biosynthesis via salvage pathway; AMP from adenine: step 1/1. In terms of biological role, catalyzes a salvage reaction resulting in the formation of AMP, that is energically less costly than de novo synthesis. The sequence is that of Adenine phosphoribosyltransferase from Flavobacterium johnsoniae (strain ATCC 17061 / DSM 2064 / JCM 8514 / BCRC 14874 / CCUG 350202 / NBRC 14942 / NCIMB 11054 / UW101) (Cytophaga johnsonae).